A 438-amino-acid chain; its full sequence is GTPase Der (438 aa).

EngA-type G domains lie at 4–168 (PIVA…PEGN) and 177–352 (IRIA…GNYC). Residues 10 to 17 (GRPNVGKS), 57 to 61 (DTGGI), 120 to 123 (NKID), 183 to 190 (GRPNVGKS), 230 to 234 (DTAGL), and 295 to 298 (NKWD) each bind GTP. One can recognise a KH-like domain in the interval 353 to 437 (KRIKTGILND…GIKLEFRERK (85 aa)).

It belongs to the TRAFAC class TrmE-Era-EngA-EngB-Septin-like GTPase superfamily. EngA (Der) GTPase family. In terms of assembly, associates with the 50S ribosomal subunit.

In terms of biological role, GTPase that plays an essential role in the late steps of ribosome biogenesis. The chain is GTPase Der from Clostridium novyi (strain NT).